The sequence spans 166 residues: Large ribosomal subunit protein uL10 (166 aa).

Belongs to the universal ribosomal protein uL10 family. Part of the ribosomal stalk of the 50S ribosomal subunit. The N-terminus interacts with L11 and the large rRNA to form the base of the stalk. The C-terminus forms an elongated spine to which L12 dimers bind in a sequential fashion forming a multimeric L10(L12)X complex.

Functionally, forms part of the ribosomal stalk, playing a central role in the interaction of the ribosome with GTP-bound translation factors. The chain is Large ribosomal subunit protein uL10 from Staphylococcus epidermidis (strain ATCC 35984 / DSM 28319 / BCRC 17069 / CCUG 31568 / BM 3577 / RP62A).